Consider the following 373-residue polypeptide: MATSASSHLNKGIKQVYMSLPQGEKVQAMYIWIDGTGEGLRCKTRTLDSEPKGVEELPEWNFDGSSTFQSEGSNSDMYLVPAAMFRDPFRKDPNKLVFCEVFKYNRKPAETNLRHTCKRIMDMVSNQHPWFGMEQEYTLMGTDGHPFGWPSNGFPGPQGPYYCGVGADKAYGRDIVEAHYRACLYAGIKIAGTNAEVMPAQWEFQIGPCEGIDMGDHLWVARFILHRVCEDFGVIATFDPKPIPGNWNGAGCHTNFSTKAMREENGLKYIEESIEKLSKRHQYHIRAYDPKGGLDNARRLTGFHETSNINDFSAGVANRGASIRIPRTVGQEKKGYFEDRRPSANCDPFSVTEALIRTCLLNETGDEPFQYKN.

Position 2 is an N-acetylalanine (alanine 2). Positions 2-25 (ATSASSHLNKGIKQVYMSLPQGEK) are required for glutamine-induced ubiquitination by CRL4(CRBN) and proteasomal degradation. An N6-acetyllysine mark is found at lysine 11 and lysine 14. One can recognise a GS beta-grasp domain in the interval 24 to 106 (EKVQAMYIWI…VFCEVFKYNR (83 aa)). At tyrosine 104 the chain carries Phosphotyrosine. Residues 113-373 (LRHTCKRIMD…TGDEPFQYKN (261 aa)) form the GS catalytic domain. Glutamate 134 serves as a coordination point for ATP. 4 residues coordinate Mn(2+): glutamate 134, glutamate 136, glutamate 196, and glutamate 203. 203–208 (EFQIGP) is a binding site for ATP. Residue 246 to 247 (NW) coordinates L-glutamate. Histidine 253 serves as a coordination point for Mn(2+). ATP is bound by residues 255-257 (NFS), arginine 319, and arginine 324. Arginine 319 contacts L-glutamate. Position 336–338 (336–338 (YFE)) interacts with ADP. A Mn(2+)-binding site is contributed by glutamate 338. Residue arginine 340 participates in L-glutamate binding. Serine 343 bears the Phosphoserine mark.

Belongs to the glutamine synthetase family. As to quaternary structure, decamer; composed of two pentamers. Interacts with PALMD. Interacts with RHOJ. Interacts with BEST2; this interaction tethers a fraction of GLUL to the membrane, causing a decrease of cytosolic glutamine synthase (GS) activity and inhibits the chloride channel activity of BEST2 by affecting the gating at the aperture in the absence of intracellular glutamate. It depends on Mg(2+) as a cofactor. Mn(2+) serves as cofactor. Post-translationally, palmitoylated; undergoes autopalmitoylation. In terms of processing, acetylated by EP300/p300; acetylation is stimulated by increased glutamine levels and promotes ubiquitin-mediated proteasomal degradation. Ubiquitinated by ZNRF1. Ubiquitinated by the DCX (DDB1-CUL4-X-box) E3 ubiquitin-protein ligase complex called CRL4(CRBN), leading to proteasomal degradation.

It is found in the cytoplasm. The protein localises to the cytosol. Its subcellular location is the microsome. It localises to the mitochondrion. The protein resides in the cell membrane. It catalyses the reaction L-glutamate + NH4(+) + ATP = L-glutamine + ADP + phosphate + H(+). It carries out the reaction L-cysteinyl-[protein] + hexadecanoyl-CoA = S-hexadecanoyl-L-cysteinyl-[protein] + CoA. With respect to regulation, glutamine synthetase activity is inhibited by methionine sulfoximine (MSO). Its function is as follows. Glutamine synthetase that catalyzes the ATP-dependent conversion of glutamate and ammonia to glutamine. Its role depends on tissue localization: in the brain, it regulates the levels of toxic ammonia and converts neurotoxic glutamate to harmless glutamine, whereas in the liver, it is one of the enzymes responsible for the removal of ammonia. Plays a key role in ammonium detoxification during erythropoiesis: the glutamine synthetase activity is required to remove ammonium generated by porphobilinogen deaminase (HMBS) during heme biosynthesis to prevent ammonium accumulation and oxidative stress. Essential for proliferation of fetal skin fibroblasts. Independently of its glutamine synthetase activity, required for endothelial cell migration during vascular development. Involved in angiogenesis by regulating membrane localization and activation of the GTPase RHOJ, possibly by promoting RHOJ palmitoylation. May act as a palmitoyltransferase for RHOJ: able to autopalmitoylate and then transfer the palmitoyl group to RHOJ. Plays a role in ribosomal 40S subunit biogenesis. Through the interaction with BEST2, inhibits BEST2 channel activity by affecting the gating at the aperture in the absence of intracellular L-glutamate, but sensitizes BEST2 to intracellular L-glutamate, which promotes the opening of BEST2 and thus relieves its inhibitory effect on BEST2. This is Glutamine synthetase from Canis lupus familiaris (Dog).